Here is a 101-residue protein sequence, read N- to C-terminus: Urinary protein 3 (101 aa).

Positions 1–21 (MGKHILLLPLGLSLLMSSLLA) are cleaved as a signal peptide. The UPAR/Ly6 domain maps to 22–99 (LQCFRCISFD…CSATPFCNMV (78 aa)). 5 cysteine pairs are disulfide-bonded: Cys24/Cys51, Cys27/Cys36, Cys43/Cys70, Cys73/Cys89, and Cys90/Cys96.

The protein resides in the secreted. This is Urinary protein 3 from Rattus norvegicus (Rat).